Reading from the N-terminus, the 633-residue chain is Phosphomethylpyrimidine synthase (633 aa).

The segment covering Met-1–Ala-13 has biased composition (polar residues). The interval Met-1–Ser-22 is disordered. Substrate-binding positions include Asn-221, Met-250, Tyr-279, His-315, Ser-335–Gly-337, Asp-376–Arg-379, and Glu-415. His-419 is a Zn(2+) binding site. Residue Tyr-442 participates in substrate binding. Residue His-483 coordinates Zn(2+). [4Fe-4S] cluster is bound by residues Cys-563, Cys-566, and Cys-571.

It belongs to the ThiC family. As to quaternary structure, homodimer. Requires [4Fe-4S] cluster as cofactor.

The catalysed reaction is 5-amino-1-(5-phospho-beta-D-ribosyl)imidazole + S-adenosyl-L-methionine = 4-amino-2-methyl-5-(phosphooxymethyl)pyrimidine + CO + 5'-deoxyadenosine + formate + L-methionine + 3 H(+). Its pathway is cofactor biosynthesis; thiamine diphosphate biosynthesis. Functionally, catalyzes the synthesis of the hydroxymethylpyrimidine phosphate (HMP-P) moiety of thiamine from aminoimidazole ribotide (AIR) in a radical S-adenosyl-L-methionine (SAM)-dependent reaction. In Bradyrhizobium sp. (strain BTAi1 / ATCC BAA-1182), this protein is Phosphomethylpyrimidine synthase.